A 215-amino-acid polypeptide reads, in one-letter code: MSKVYEWFDERLELQAIADDVSSKYVPPHVNIFYCLGGITFTSFLVQVATGFAMTFYYRPTVAEAFASVQYIMTDVNFGWLIRSIHRWSASMMVMMMILHVFRVYLTGGFKRPRELTWVTGVIMAVCTVSFGVTGYSLPWDQVGYWAVKIVTGVPDAIPVVGAALVELLRGGVGVGQATLTRFYSLHTFVLPLATAVFMLAHFLMIRKQGISGPL.

A helical transmembrane segment spans residues 32 to 52 (IFYCLGGITFTSFLVQVATGF). Cys-35 lines the heme c pocket. 2 residues coordinate heme b: His-86 and His-100. A run of 3 helical transmembrane segments spans residues 90 to 110 (ASMM…TGGF), 116 to 136 (LTWV…VTGY), and 186 to 206 (LHTF…FLMI). Heme b-binding residues include His-187 and His-202.

Belongs to the cytochrome b family. PetB subfamily. In terms of assembly, the 4 large subunits of the cytochrome b6-f complex are cytochrome b6, subunit IV (17 kDa polypeptide, PetD), cytochrome f and the Rieske protein, while the 4 small subunits are PetG, PetL, PetM and PetN. The complex functions as a dimer. Heme b serves as cofactor. Requires heme c as cofactor.

Its subcellular location is the plastid. It localises to the chloroplast thylakoid membrane. Its function is as follows. Component of the cytochrome b6-f complex, which mediates electron transfer between photosystem II (PSII) and photosystem I (PSI), cyclic electron flow around PSI, and state transitions. This Oltmannsiellopsis viridis (Marine flagellate) protein is Cytochrome b6.